A 155-amino-acid chain; its full sequence is MVMSEIQGQRIAFIQATWHRNIVDRARDGFTDAIVELGYPKDTVDFFEVPGAFEIPLHARRLAKTGRYQAIVAAGLVVDGGIYRHDFVATAVIDGLMRVQLDTDVPVFSVVLTPHHFHEHAEHVDYFSTHFVKKGAEAARAVDATVKSLKALPTS.

Residues Trp-18, 52 to 54, and 76 to 78 each bind 5-amino-6-(D-ribitylamino)uracil; these read AFE and LVV. Catalysis depends on Arg-84, which acts as the Proton donor. Ser-109 lines the 5-amino-6-(D-ribitylamino)uracil pocket. (2S)-2-hydroxy-3-oxobutyl phosphate is bound at residue His-123.

It belongs to the DMRL synthase family.

It catalyses the reaction (2S)-2-hydroxy-3-oxobutyl phosphate + 5-amino-6-(D-ribitylamino)uracil = 6,7-dimethyl-8-(1-D-ribityl)lumazine + phosphate + 2 H2O + H(+). It functions in the pathway cofactor biosynthesis; riboflavin biosynthesis; riboflavin from 2-hydroxy-3-oxobutyl phosphate and 5-amino-6-(D-ribitylamino)uracil: step 1/2. In terms of biological role, catalyzes the formation of 6,7-dimethyl-8-ribityllumazine by condensation of 5-amino-6-(D-ribitylamino)uracil with 3,4-dihydroxy-2-butanone 4-phosphate. This is the penultimate step in the biosynthesis of riboflavin. The chain is 6,7-dimethyl-8-ribityllumazine synthase from Rhodococcus erythropolis (Arthrobacter picolinophilus).